The primary structure comprises 344 residues: Methionine synthase (344 aa).

Zn(2+) is bound by residues H211, C213, E236, and C315.

It belongs to the archaeal MetE family. Requires Zn(2+) as cofactor.

The protein operates within amino-acid biosynthesis; L-methionine biosynthesis via de novo pathway. Its function is as follows. Catalyzes the transfer of a methyl group to L-homocysteine resulting in methionine formation. The physiological methyl donor is unknown. The polypeptide is Methionine synthase (Thermoplasma volcanium (strain ATCC 51530 / DSM 4299 / JCM 9571 / NBRC 15438 / GSS1)).